Consider the following 281-residue polypeptide: 4-hydroxy-3-methylbut-2-enyl diphosphate reductase (281 aa).

Cys-12 is a [4Fe-4S] cluster binding site. Residues His-41 and His-74 each coordinate (2E)-4-hydroxy-3-methylbut-2-enyl diphosphate. 2 residues coordinate dimethylallyl diphosphate: His-41 and His-74. The isopentenyl diphosphate site is built by His-41 and His-74. Cys-96 contributes to the [4Fe-4S] cluster binding site. His-124 contributes to the (2E)-4-hydroxy-3-methylbut-2-enyl diphosphate binding site. His-124 is a dimethylallyl diphosphate binding site. His-124 contributes to the isopentenyl diphosphate binding site. The Proton donor role is filled by Glu-126. Thr-164 lines the (2E)-4-hydroxy-3-methylbut-2-enyl diphosphate pocket. Residue Cys-193 coordinates [4Fe-4S] cluster. (2E)-4-hydroxy-3-methylbut-2-enyl diphosphate is bound by residues Ser-221, Asn-223, and Ser-265. Dimethylallyl diphosphate is bound by residues Ser-221, Asn-223, and Ser-265. Isopentenyl diphosphate contacts are provided by Ser-221, Asn-223, and Ser-265.

The protein belongs to the IspH family. [4Fe-4S] cluster is required as a cofactor.

The catalysed reaction is isopentenyl diphosphate + 2 oxidized [2Fe-2S]-[ferredoxin] + H2O = (2E)-4-hydroxy-3-methylbut-2-enyl diphosphate + 2 reduced [2Fe-2S]-[ferredoxin] + 2 H(+). The enzyme catalyses dimethylallyl diphosphate + 2 oxidized [2Fe-2S]-[ferredoxin] + H2O = (2E)-4-hydroxy-3-methylbut-2-enyl diphosphate + 2 reduced [2Fe-2S]-[ferredoxin] + 2 H(+). Its pathway is isoprenoid biosynthesis; dimethylallyl diphosphate biosynthesis; dimethylallyl diphosphate from (2E)-4-hydroxy-3-methylbutenyl diphosphate: step 1/1. The protein operates within isoprenoid biosynthesis; isopentenyl diphosphate biosynthesis via DXP pathway; isopentenyl diphosphate from 1-deoxy-D-xylulose 5-phosphate: step 6/6. Its function is as follows. Catalyzes the conversion of 1-hydroxy-2-methyl-2-(E)-butenyl 4-diphosphate (HMBPP) into a mixture of isopentenyl diphosphate (IPP) and dimethylallyl diphosphate (DMAPP). Acts in the terminal step of the DOXP/MEP pathway for isoprenoid precursor biosynthesis. The sequence is that of 4-hydroxy-3-methylbut-2-enyl diphosphate reductase from Nitratidesulfovibrio vulgaris (strain DSM 19637 / Miyazaki F) (Desulfovibrio vulgaris).